A 486-amino-acid chain; its full sequence is Aromatic-L-amino-acid decarboxylase (486 aa).

M1 carries the N-acetylmethionine modification. 2 repeat units span residues 58 to 115 (QDVE…TELE) and 118 to 178 (MMDW…TQGA). The segment at 58-178 (QDVEKIIMPG…AASPGLTQGA (121 aa)) is 2 X approximate tandem repeats. Position 82 (T82) interacts with substrate. Residues A148 and S149 each contribute to the pyridoxal 5'-phosphate site. Position 192 (H192) interacts with substrate. Residues T246 and N300 each coordinate pyridoxal 5'-phosphate. At K303 the chain carries N6-(pyridoxal phosphate)lysine.

This sequence belongs to the group II decarboxylase family. In terms of assembly, homodimer. Pyridoxal 5'-phosphate is required as a cofactor.

The enzyme catalyses L-dopa + H(+) = dopamine + CO2. It catalyses the reaction 5-hydroxy-L-tryptophan + H(+) = serotonin + CO2. Its pathway is catecholamine biosynthesis; dopamine biosynthesis; dopamine from L-tyrosine: step 2/2. Its function is as follows. Catalyzes the decarboxylation of L-3,4-dihydroxyphenylalanine (DOPA) to dopamine and L-5-hydroxytryptophan to serotonin. The polypeptide is Aromatic-L-amino-acid decarboxylase (DDC) (Sus scrofa (Pig)).